A 182-amino-acid chain; its full sequence is Putative manganese efflux pump MntP (182 aa).

A run of 6 helical transmembrane segments spans residues 6–26 (LIPL…VSLG), 37–57 (ILYI…IGMV), 71–91 (HFAG…SSIL), 101–121 (IGIS…SVGL), 131–151 (VITI…GLFI), and 162–182 (YGEI…LFPI).

This sequence belongs to the MntP (TC 9.B.29) family.

It localises to the cell membrane. In terms of biological role, probably functions as a manganese efflux pump. The chain is Putative manganese efflux pump MntP from Bacillus cereus (strain AH187).